We begin with the raw amino-acid sequence, 503 residues long: Probable cytosol aminopeptidase (503 aa).

Mn(2+)-binding residues include Lys274 and Asp279. Lys286 is an active-site residue. Residues Asp297, Asp356, and Glu358 each coordinate Mn(2+). The active site involves Arg360.

The protein belongs to the peptidase M17 family. It depends on Mn(2+) as a cofactor.

The protein localises to the cytoplasm. The catalysed reaction is Release of an N-terminal amino acid, Xaa-|-Yaa-, in which Xaa is preferably Leu, but may be other amino acids including Pro although not Arg or Lys, and Yaa may be Pro. Amino acid amides and methyl esters are also readily hydrolyzed, but rates on arylamides are exceedingly low.. It catalyses the reaction Release of an N-terminal amino acid, preferentially leucine, but not glutamic or aspartic acids.. Functionally, presumably involved in the processing and regular turnover of intracellular proteins. Catalyzes the removal of unsubstituted N-terminal amino acids from various peptides. This is Probable cytosol aminopeptidase from Paraburkholderia phymatum (strain DSM 17167 / CIP 108236 / LMG 21445 / STM815) (Burkholderia phymatum).